The sequence spans 141 residues: Putative pre-16S rRNA nuclease (141 aa).

It belongs to the YqgF nuclease family.

Its subcellular location is the cytoplasm. Could be a nuclease involved in processing of the 5'-end of pre-16S rRNA. In Sodalis glossinidius (strain morsitans), this protein is Putative pre-16S rRNA nuclease.